A 326-amino-acid chain; its full sequence is D-amino-acid oxidase (326 aa).

Residues G18, V19, T46, T47, S48, A52, A53, V162, and S179 each contribute to the FAD site. 2 residues coordinate D-proline: Y222 and R277. Residues Y222 and R277 each contribute to the D-serine site. The FAD site is built by R277, G303, G304, G306, and T308. D-proline is bound at residue G304. Residue G304 participates in D-serine binding.

Belongs to the DAMOX/DASOX family. As to quaternary structure, monomer. It depends on FAD as a cofactor.

Its subcellular location is the cytoplasm. It localises to the secreted. The protein resides in the cell wall. The enzyme catalyses a D-alpha-amino acid + O2 + H2O = a 2-oxocarboxylate + H2O2 + NH4(+). It catalyses the reaction D-valine + O2 + H2O = 3-methyl-2-oxobutanoate + H2O2 + NH4(+). It carries out the reaction D-leucine + O2 + H2O = 4-methyl-2-oxopentanoate + H2O2 + NH4(+). The catalysed reaction is D-isoleucine + O2 + H2O = (R)-3-methyl-2-oxopentanoate + H2O2 + NH4(+). The enzyme catalyses D-tyrosine + O2 + H2O = 3-(4-hydroxyphenyl)pyruvate + H2O2 + NH4(+). It catalyses the reaction D-threonine + O2 + H2O = (S)-3-hydroxy-2-oxobutanoate + H2O2 + NH4(+). Its activity is regulated as follows. Inhibited by benzoate and phenylmethylsulfonyl fluoride (PMSF). Weakly inhibited by anthranilate, crotonate, and the amino acid-modifying agents dithionitrobenzoic acid and diethyl pyrocarbonate. Not inhibited by malonate, meso-tartrate, D-malate, or the amino acid-modifying agents iodoacetic acid or butane-2,3-dione. In terms of biological role, catalyzes the oxidative deamination of D-amino acids with broad substrate specificity. This is D-amino-acid oxidase from Rubrobacter xylanophilus (strain DSM 9941 / JCM 11954 / NBRC 16129 / PRD-1).